The primary structure comprises 315 residues: Acetyl-coenzyme A carboxylase carboxyl transferase subunit alpha (315 aa).

The region spanning 40–293 is the CoA carboxyltransferase C-terminal domain; the sequence is LQDKSKTLTE…RAELSSQLAM (254 aa).

It belongs to the AccA family. As to quaternary structure, acetyl-CoA carboxylase is a heterohexamer composed of biotin carboxyl carrier protein (AccB), biotin carboxylase (AccC) and two subunits each of ACCase subunit alpha (AccA) and ACCase subunit beta (AccD).

It localises to the cytoplasm. It carries out the reaction N(6)-carboxybiotinyl-L-lysyl-[protein] + acetyl-CoA = N(6)-biotinyl-L-lysyl-[protein] + malonyl-CoA. It functions in the pathway lipid metabolism; malonyl-CoA biosynthesis; malonyl-CoA from acetyl-CoA: step 1/1. Component of the acetyl coenzyme A carboxylase (ACC) complex. First, biotin carboxylase catalyzes the carboxylation of biotin on its carrier protein (BCCP) and then the CO(2) group is transferred by the carboxyltransferase to acetyl-CoA to form malonyl-CoA. The chain is Acetyl-coenzyme A carboxylase carboxyl transferase subunit alpha from Pseudomonas fluorescens (strain Pf0-1).